A 144-amino-acid polypeptide reads, in one-letter code: Transcriptional regulator SlyA (144 aa).

Positions 2–135 (ESSLGSDLAR…LNNIIAKLER (134 aa)) constitute an HTH marR-type domain. Positions 49-72 (QIQLAKAIGIEQPSLVRTLDQLES) form a DNA-binding region, H-T-H motif.

It belongs to the SlyA family. Homodimer.

Transcription regulator that can specifically activate or repress expression of target genes. This chain is Transcriptional regulator SlyA, found in Blochmanniella floridana.